A 489-amino-acid polypeptide reads, in one-letter code: MEAPDCEVLSVREQLFHERIRECIISTLLFATLYILCHIFLTRFKKPAEFTTVDDADATVNKIALELCTFTLAIALGAVLLLPFSIISNEVLLSLPRNYYIQWLNGSLIHGLWNLVFLFSNLSLIFLMPFAYFFTESEGFAGSRKGVLGRVYETVVMLMLLTLLVLGMVWVASAIVDNNKASRESLYDFWEYYLPYLYSCISFLGVLLLLVCTPLGLARMFSVTGKLLVKPRLLEDLEEQLYCSAFEEAALTRRICNPTSCWLPLDMELLHRQLLALQTQRVLLEKRRKASAWQRNLGYPLAMLCLLVLTGLSVLIVAIHILELLIDEAAMPRGMQGASLGQVSFSKLGSFGAVVQVVLIFYLMVSSVVGFYSSPLFRSLRPRWHDTAMTQIIGNCVCLLVLSSALPVFSRTLGLTRFDLLGDFGRFNWLGNFYIVFLYNAAFAGLTTLCLVKTFTAAVRAELIRAFGLDRLPLPVSGFPRASRKTQHQ.

At 1-21 the chain is on the extracellular side; it reads MEAPDCEVLSVREQLFHERIR. Positions 1 to 59 are interaction with LGB; that stretch reads MEAPDCEVLSVREQLFHERIRECIISTLLFATLYILCHIFLTRFKKPAEFTTVDDADAT. An LCN1-binding region spans residues 1–76; it reads MEAPDCEVLS…LCTFTLAIAL (76 aa). Residues 22–42 traverse the membrane as a helical segment; it reads ECIISTLLFATLYILCHIFLT. Topologically, residues 43-66 are cytoplasmic; the sequence is RFKKPAEFTTVDDADATVNKIALE. The helical transmembrane segment at 67–87 threads the bilayer; that stretch reads LCTFTLAIALGAVLLLPFSII. Residues 88 to 114 are Extracellular-facing; it reads SNEVLLSLPRNYYIQWLNGSLIHGLWN. The chain crosses the membrane as a helical span at residues 115-135; that stretch reads LVFLFSNLSLIFLMPFAYFFT. Topologically, residues 136 to 154 are cytoplasmic; sequence ESEGFAGSRKGVLGRVYET. Residues 155 to 175 traverse the membrane as a helical segment; it reads VVMLMLLTLLVLGMVWVASAI. Residues 176–196 lie on the Extracellular side of the membrane; it reads VDNNKASRESLYDFWEYYLPY. A helical transmembrane segment spans residues 197-217; sequence LYSCISFLGVLLLLVCTPLGL. Over 218–305 the chain is Cytoplasmic; it reads ARMFSVTGKL…NLGYPLAMLC (88 aa). A helical membrane pass occupies residues 306-326; the sequence is LLVLTGLSVLIVAIHILELLI. Over 327–350 the chain is Extracellular; it reads DEAAMPRGMQGASLGQVSFSKLGS. A helical transmembrane segment spans residues 351–371; that stretch reads FGAVVQVVLIFYLMVSSVVGF. Residues 372–388 are Cytoplasmic-facing; that stretch reads YSSPLFRSLRPRWHDTA. A helical membrane pass occupies residues 389-409; that stretch reads MTQIIGNCVCLLVLSSALPVF. Residues 410–431 are Extracellular-facing; sequence SRTLGLTRFDLLGDFGRFNWLG. A helical transmembrane segment spans residues 432 to 452; sequence NFYIVFLYNAAFAGLTTLCLV. Topologically, residues 453–489 are cytoplasmic; it reads KTFTAAVRAELIRAFGLDRLPLPVSGFPRASRKTQHQ.

Belongs to the LIMR family. As to quaternary structure, dimer. Can also form higher oligomers. Interacts with LCN1; this interaction mediates the endocytosis of LCN1. Interacts with UBAC2, FAF2, VCP, AMFR, ZNRF3, CTNNB1, LRP6, GSK3A, GSK3B, FZD6, DVL2 and RNF43. Interaction with LGB and SCGB1A1 is controversial.

It localises to the cell membrane. It is found in the endoplasmic reticulum membrane. Plays an essential role in lymphocyte development by negatively regulating the canonical Wnt signaling pathway. In association with UBAC2 and E3 ubiquitin-protein ligase AMFR, promotes the ubiquitin-mediated degradation of CTNNB1 and Wnt receptors FZD6 and LRP6. LMBR1L stabilizes the beta-catenin destruction complex that is required for regulating CTNNB1 levels. Acts as a LCN1 receptor and can mediate its endocytosis. The protein is Protein LMBR1L (LMBR1L) of Macaca fascicularis (Crab-eating macaque).